A 325-amino-acid chain; its full sequence is GMP reductase (325 aa).

Catalysis depends on C174, which acts as the Thioimidate intermediate. 203 to 226 (IIADGGLRTHGDIAKSIRFGATMV) contributes to the NADP(+) binding site.

Belongs to the IMPDH/GMPR family. GuaC type 2 subfamily.

It carries out the reaction IMP + NH4(+) + NADP(+) = GMP + NADPH + 2 H(+). Catalyzes the irreversible NADPH-dependent deamination of GMP to IMP. It functions in the conversion of nucleobase, nucleoside and nucleotide derivatives of G to A nucleotides, and in maintaining the intracellular balance of A and G nucleotides. This Staphylococcus epidermidis (strain ATCC 35984 / DSM 28319 / BCRC 17069 / CCUG 31568 / BM 3577 / RP62A) protein is GMP reductase.